The following is a 110-amino-acid chain: Thiosulfate sulfurtransferase GlpE (110 aa).

Positions 19–107 (EDSLAVLVDI…WRRQALPIIQ (89 aa)) constitute a Rhodanese domain. The Cysteine persulfide intermediate role is filled by cysteine 67.

This sequence belongs to the GlpE family.

The protein localises to the cytoplasm. The enzyme catalyses thiosulfate + hydrogen cyanide = thiocyanate + sulfite + 2 H(+). It carries out the reaction thiosulfate + [thioredoxin]-dithiol = [thioredoxin]-disulfide + hydrogen sulfide + sulfite + 2 H(+). Functionally, transferase that catalyzes the transfer of sulfur from thiosulfate to thiophilic acceptors such as cyanide or dithiols. May function in a CysM-independent thiosulfate assimilation pathway by catalyzing the conversion of thiosulfate to sulfite, which can then be used for L-cysteine biosynthesis. The chain is Thiosulfate sulfurtransferase GlpE from Photobacterium profundum (strain SS9).